Consider the following 499-residue polypeptide: Probable cytosol aminopeptidase (499 aa).

2 residues coordinate Mn(2+): K269 and D274. Residue K281 is part of the active site. 3 residues coordinate Mn(2+): D292, D351, and E353. R355 is an active-site residue.

The protein belongs to the peptidase M17 family. Mn(2+) serves as cofactor.

It localises to the cytoplasm. The catalysed reaction is Release of an N-terminal amino acid, Xaa-|-Yaa-, in which Xaa is preferably Leu, but may be other amino acids including Pro although not Arg or Lys, and Yaa may be Pro. Amino acid amides and methyl esters are also readily hydrolyzed, but rates on arylamides are exceedingly low.. The enzyme catalyses Release of an N-terminal amino acid, preferentially leucine, but not glutamic or aspartic acids.. Presumably involved in the processing and regular turnover of intracellular proteins. Catalyzes the removal of unsubstituted N-terminal amino acids from various peptides. This chain is Probable cytosol aminopeptidase, found in Actinobacillus pleuropneumoniae serotype 5b (strain L20).